The sequence spans 230 residues: Cytidylate kinase (230 aa).

14–22 provides a ligand contact to ATP; that stretch reads GPSGVGKSS.

The protein belongs to the cytidylate kinase family. Type 1 subfamily.

The protein resides in the cytoplasm. It catalyses the reaction CMP + ATP = CDP + ADP. The catalysed reaction is dCMP + ATP = dCDP + ADP. The sequence is that of Cytidylate kinase from Buchnera aphidicola subsp. Baizongia pistaciae (strain Bp).